We begin with the raw amino-acid sequence, 432 residues long: Polypyrimidine tract-binding protein homolog 3 (432 aa).

4 RRM domains span residues 6–80 (KVVH…FSSH), 98–187 (NRIL…YNND), 245–319 (CTVL…FSKH), and 355–429 (KMIH…FSQL).

The protein resides in the nucleus. Plays a role in pre-mRNA splicing. Binds to the polypyrimidine tract of introns. May promote the binding of U2 snRNP to pre-mRNA. The protein is Polypyrimidine tract-binding protein homolog 3 of Arabidopsis thaliana (Mouse-ear cress).